The primary structure comprises 251 residues: MIILVSPAKKLNEERARGQATTVPRFLDQAAELAGVARTWSEDEIAKLMGISATLAKLNKDRFAAWSGDGQCAAGLMFDGDVYKELEPATFDDVTKDAAQRRLRILSGLYGLLRPTDAIEAYRLEMGRKTPGHPAGTLYGFWGDKIAAAIVEEARELGVGSVLNLASEEYAKAVPPKALGDLTLISPRFEEERGGSRKVIGVAAKRARGAMARWVLENGITEADDLKGFTVGGYAFDAETSAPQRPIFVRG.

Belongs to the UPF0246 family.

The chain is UPF0246 protein TM1040_2658 from Ruegeria sp. (strain TM1040) (Silicibacter sp.).